The primary structure comprises 364 residues: Methylthioribose-1-phosphate isomerase (364 aa).

The Proton donor role is filled by Asp-254.

This sequence belongs to the eIF-2B alpha/beta/delta subunits family. MtnA subfamily.

Its subcellular location is the cytoplasm. The protein resides in the nucleus. The enzyme catalyses 5-(methylsulfanyl)-alpha-D-ribose 1-phosphate = 5-(methylsulfanyl)-D-ribulose 1-phosphate. The protein operates within amino-acid biosynthesis; L-methionine biosynthesis via salvage pathway; L-methionine from S-methyl-5-thio-alpha-D-ribose 1-phosphate: step 1/6. In terms of biological role, catalyzes the interconversion of methylthioribose-1-phosphate (MTR-1-P) into methylthioribulose-1-phosphate (MTRu-1-P). This Drosophila simulans (Fruit fly) protein is Methylthioribose-1-phosphate isomerase.